Reading from the N-terminus, the 345-residue chain is D(2) dopamine receptor B (345 aa).

Topologically, residues 1–10 are extracellular; that stretch reads EWRFSRIHCD. Cysteines 9 and 84 form a disulfide. The chain crosses the membrane as a helical span at residues 11 to 32; sequence IFVTLDVMMCTASILNLCAISI. The Cytoplasmic segment spans residues 33-53; sequence DRYTAVAMPMLYNTRYSSKRR. A helical membrane pass occupies residues 54–74; sequence VTVMISVVWVLSFAISCPLLF. The Extracellular portion of the chain corresponds to 75 to 90; the sequence is GLNNTASTVCIIDNPA. Residue asparagine 77 is glycosylated (N-linked (GlcNAc...) asparagine). The chain crosses the membrane as a helical span at residues 91 to 115; sequence FVIYSSIVSFYVPFIVTLLVYVQIY. Topologically, residues 116–275 are cytoplasmic; it reads IVLRKRRKRV…SQHKEKKATQ (160 aa). Over residues 166-177 the composition is skewed to basic and acidic residues; sequence KKKVEAGNHPED. The tract at residues 166–199 is disordered; it reads KKKVEAGNHPEDMEMEMMSSTSPPEKTKHKSASP. Residues 276–297 traverse the membrane as a helical segment; that stretch reads MLAIVLGVFIICWLPFFITHIL. Topologically, residues 298–311 are extracellular; it reads NMHCNCNIPQALYS. Residues cysteine 301 and cysteine 303 are joined by a disulfide bond. The helical transmembrane segment at 312 to 333 threads the bilayer; the sequence is AFTWLGYVNSAVNPIIYTTFNV. Residues 334-345 lie on the Cytoplasmic side of the membrane; sequence EFRKAFIKILHC. Cysteine 345 is lipidated: S-palmitoyl cysteine.

This sequence belongs to the G-protein coupled receptor 1 family. Palmitoylated. Palmitoylation is probably required for proper localization to the plasma membrane and stability of the receptor. In terms of tissue distribution, brain; pituitary.

The protein resides in the cell membrane. It is found in the golgi apparatus membrane. Functionally, this is one of the five types (D1 to D5) of receptors for dopamine. The activity of this receptor is mediated by G proteins which inhibits adenylyl cyclase. In Xenopus D2R is involved in the regulation of the melanotrope cells of the intermediate pituitary during background adaptation of the animal. The chain is D(2) dopamine receptor B (drd2-b) from Xenopus laevis (African clawed frog).